We begin with the raw amino-acid sequence, 727 residues long: 1,4-alpha-glucan branching enzyme GlgB (727 aa).

Aspartate 405 acts as the Nucleophile in catalysis. Glutamate 458 (proton donor) is an active-site residue.

It belongs to the glycosyl hydrolase 13 family. GlgB subfamily. Monomer.

The catalysed reaction is Transfers a segment of a (1-&gt;4)-alpha-D-glucan chain to a primary hydroxy group in a similar glucan chain.. It participates in glycan biosynthesis; glycogen biosynthesis. Functionally, catalyzes the formation of the alpha-1,6-glucosidic linkages in glycogen by scission of a 1,4-alpha-linked oligosaccharide from growing alpha-1,4-glucan chains and the subsequent attachment of the oligosaccharide to the alpha-1,6 position. The chain is 1,4-alpha-glucan branching enzyme GlgB from Yersinia pseudotuberculosis serotype O:1b (strain IP 31758).